We begin with the raw amino-acid sequence, 498 residues long: NADH-quinone oxidoreductase subunit N 2 (498 aa).

14 helical membrane-spanning segments follow: residues 19–39 (VATQLSIIFGWASVLLVIALF), 47–67 (IVGYLAMVGAMVAAAVGIPLW), 83–103 (YSLTLNWLFLAAAAITMVLSL), 114–134 (SEYYVLVLFATGGMMLLAQGA), 136–156 (LIILFLGLELLSIVLYVLTGF), 171–191 (LLIGAFAGGFVVFGIALLYGA), 215–235 (IYLLAGAALVVVGFGYKVAMA), 249–269 (PTPIAGLLSVGSKAAGFAALL), 282–302 (IWAPVLAVLAIATLAVGNIGA), 317–337 (IGHAGYILFGVIAAGAPGGIA), 345–365 (VLLYLIAYTFTNLGAFGVLIA), 389–409 (LAVAMAVCMLSLAGVPPTGGF), 420–440 (WLSGMGWITVIGVIVAAIAAF), and 468–488 (AGLALATLGVLILGFLPTPAI).

It belongs to the complex I subunit 2 family. In terms of assembly, NDH-1 is composed of 14 different subunits. Subunits NuoA, H, J, K, L, M, N constitute the membrane sector of the complex.

It localises to the cell membrane. It carries out the reaction a quinone + NADH + 5 H(+)(in) = a quinol + NAD(+) + 4 H(+)(out). Its function is as follows. NDH-1 shuttles electrons from NADH, via FMN and iron-sulfur (Fe-S) centers, to quinones in the respiratory chain. The immediate electron acceptor for the enzyme in this species is believed to be ubiquinone. Couples the redox reaction to proton translocation (for every two electrons transferred, four hydrogen ions are translocated across the cytoplasmic membrane), and thus conserves the redox energy in a proton gradient. This chain is NADH-quinone oxidoreductase subunit N 2, found in Roseiflexus castenholzii (strain DSM 13941 / HLO8).